The sequence spans 154 residues: Myoglobin (154 aa).

The Globin domain maps to Gly2–Lys148. At Ser4 the chain carries Phosphoserine. Thr68 carries the post-translational modification Phosphothreonine. His94 is a heme b binding site.

The protein belongs to the globin family. As to quaternary structure, monomeric.

The protein localises to the cytoplasm. It localises to the sarcoplasm. It carries out the reaction Fe(III)-heme b-[protein] + nitric oxide + H2O = Fe(II)-heme b-[protein] + nitrite + 2 H(+). It catalyses the reaction H2O2 + AH2 = A + 2 H2O. Functionally, monomeric heme protein which primary function is to store oxygen and facilitate its diffusion within muscle tissues. Reversibly binds oxygen through a pentacoordinated heme iron and enables its timely and efficient release as needed during periods of heightened demand. Depending on the oxidative conditions of tissues and cells, and in addition to its ability to bind oxygen, it also has a nitrite reductase activity whereby it regulates the production of bioactive nitric oxide. Under stress conditions, like hypoxia and anoxia, it also protects cells against reactive oxygen species thanks to its pseudoperoxidase activity. This is Myoglobin (MB) from Loxodonta africana (African elephant).